Here is a 253-residue protein sequence, read N- to C-terminus: Small ribosomal subunit protein eS6 (253 aa).

Positions 200-253 (KKRLAKRKQSENDYAKLLAQRKKESKVRRQEELKRRRSASMRDSKSSDKSAPQK) are disordered. A compositionally biased stretch (basic and acidic residues) spans 226-247 (VRRQEELKRRRSASMRDSKSSD).

The protein belongs to the eukaryotic ribosomal protein eS6 family. In terms of assembly, component of the small ribosomal subunit. Part of the small subunit (SSU) processome, composed of more than 70 proteins and the RNA chaperone small nucleolar RNA (snoRNA) U3. Post-translationally, ribosomal protein S6 is the major substrate of protein kinases in eukaryote ribosomes.

The protein resides in the cytoplasm. It is found in the nucleus. Its subcellular location is the nucleolus. Functionally, component of the 40S small ribosomal subunit. Plays an important role in controlling cell growth and proliferation through the selective translation of particular classes of mRNA. Part of the small subunit (SSU) processome, first precursor of the small eukaryotic ribosomal subunit. During the assembly of the SSU processome in the nucleolus, many ribosome biogenesis factors, an RNA chaperone and ribosomal proteins associate with the nascent pre-rRNA and work in concert to generate RNA folding, modifications, rearrangements and cleavage as well as targeted degradation of pre-ribosomal RNA by the RNA exosome. The chain is Small ribosomal subunit protein eS6 (RpS6) from Spodoptera frugiperda (Fall armyworm).